We begin with the raw amino-acid sequence, 409 residues long: Growth-regulating factor 8 (409 aa).

2 stretches are compositionally biased toward gly residues: residues 1–10 (MLSSCGGHGH) and 27–36 (QQGGGGGGGQ). The tract at residues 1 to 81 (MLSSCGGHGH…GGGGQMLSFS (81 aa)) is disordered. Residues 56–68 (SSSSFLGSTSSSC) show a composition bias toward low complexity. Residues 107–142 (PFTPTQWMELEHQALIYKHIAANVSVPSSLLLPIRR) form the QLQ domain. Residues 158–202 (DVEPRRCRRTDGKKWRCSRDAVGDQKYCERHINRGRHRSRKHVEG) enclose the WRC domain. 2 consecutive short sequence motifs (bipartite nuclear localization signal) follow at residues 163-173 (RCRRTDGKKWR) and 191-198 (RGRHRSRK). The interval 221–242 (SSRGHTVARQKQVKGSAATVSD) is disordered.

It belongs to the GRF family.

The protein localises to the nucleus. In terms of biological role, transcription activator that plays a regulatory role in gibberellin-induced stem elongation. This Oryza sativa subsp. japonica (Rice) protein is Growth-regulating factor 8 (GRF8).